A 940-amino-acid polypeptide reads, in one-letter code: UvrABC system protein A (940 aa).

An ATP-binding site is contributed by 31–38; sequence GLSGSGKS. The segment at 252–279 adopts a C4-type zinc-finger fold; the sequence is CPHCGYSMRELEPRLFSFNNPAGACPTC. 2 consecutive ABC transporter domains span residues 309 to 586 and 606 to 936; these read WDQK…PNSL and KDAK…RFLK. ATP is bound at residue 639–646; the sequence is GVSGSGKS. The C4-type zinc-finger motif lies at 739-765; the sequence is CEACQGDGVIKVEMHFLPDVYVPCDVC.

It belongs to the ABC transporter superfamily. UvrA family. As to quaternary structure, forms a heterotetramer with UvrB during the search for lesions.

The protein localises to the cytoplasm. Functionally, the UvrABC repair system catalyzes the recognition and processing of DNA lesions. UvrA is an ATPase and a DNA-binding protein. A damage recognition complex composed of 2 UvrA and 2 UvrB subunits scans DNA for abnormalities. When the presence of a lesion has been verified by UvrB, the UvrA molecules dissociate. The sequence is that of UvrABC system protein A from Vibrio cholerae serotype O1 (strain ATCC 39315 / El Tor Inaba N16961).